The following is a 217-amino-acid chain: Probable transaldolase (217 aa).

Catalysis depends on K83, which acts as the Schiff-base intermediate with substrate.

This sequence belongs to the transaldolase family. Type 3B subfamily.

The protein localises to the cytoplasm. The enzyme catalyses D-sedoheptulose 7-phosphate + D-glyceraldehyde 3-phosphate = D-erythrose 4-phosphate + beta-D-fructose 6-phosphate. Its pathway is carbohydrate degradation; pentose phosphate pathway; D-glyceraldehyde 3-phosphate and beta-D-fructose 6-phosphate from D-ribose 5-phosphate and D-xylulose 5-phosphate (non-oxidative stage): step 2/3. Functionally, transaldolase is important for the balance of metabolites in the pentose-phosphate pathway. The sequence is that of Probable transaldolase from Lactiplantibacillus plantarum (strain ATCC BAA-793 / NCIMB 8826 / WCFS1) (Lactobacillus plantarum).